We begin with the raw amino-acid sequence, 307 residues long: UDP-N-acetylenolpyruvoylglucosamine reductase (307 aa).

Positions 33-197 constitute an FAD-binding PCMH-type domain; that stretch reads TGGNADFYIT…LEAAFTLAPG (165 aa). R176 is a catalytic residue. Residue S226 is the Proton donor of the active site. Residue E296 is part of the active site.

It belongs to the MurB family. FAD is required as a cofactor.

It is found in the cytoplasm. The enzyme catalyses UDP-N-acetyl-alpha-D-muramate + NADP(+) = UDP-N-acetyl-3-O-(1-carboxyvinyl)-alpha-D-glucosamine + NADPH + H(+). It functions in the pathway cell wall biogenesis; peptidoglycan biosynthesis. Cell wall formation. The chain is UDP-N-acetylenolpyruvoylglucosamine reductase from Staphylococcus aureus (strain COL).